Here is a 141-residue protein sequence, read N- to C-terminus: Galactose-6-phosphate isomerase subunit LacA (141 aa).

Belongs to the LacAB/RpiB family. In terms of assembly, heteromultimeric protein consisting of LacA and LacB.

The catalysed reaction is aldehydo-D-galactose 6-phosphate = keto-D-tagatose 6-phosphate. It functions in the pathway carbohydrate metabolism; D-galactose 6-phosphate degradation; D-tagatose 6-phosphate from D-galactose 6-phosphate: step 1/1. The chain is Galactose-6-phosphate isomerase subunit LacA from Streptococcus pneumoniae serotype 4 (strain ATCC BAA-334 / TIGR4).